The primary structure comprises 190 residues: Shikimate kinase (190 aa).

14–19 (GSGKST) provides a ligand contact to ATP. Residue Ser18 coordinates Mg(2+). 3 residues coordinate substrate: Asp36, Arg60, and Gly82. Arg120 contributes to the ATP binding site. Residue Arg147 coordinates substrate.

This sequence belongs to the shikimate kinase family. Monomer. Mg(2+) serves as cofactor.

It localises to the cytoplasm. It carries out the reaction shikimate + ATP = 3-phosphoshikimate + ADP + H(+). Its pathway is metabolic intermediate biosynthesis; chorismate biosynthesis; chorismate from D-erythrose 4-phosphate and phosphoenolpyruvate: step 5/7. Catalyzes the specific phosphorylation of the 3-hydroxyl group of shikimic acid using ATP as a cosubstrate. This Chlorobium phaeobacteroides (strain DSM 266 / SMG 266 / 2430) protein is Shikimate kinase.